The primary structure comprises 707 residues: Potassium-transporting ATPase ATP-binding subunit (707 aa).

A compositionally biased stretch (basic and acidic residues) spans 1–11; the sequence is MNTDTQKHEDA. The segment at 1–37 is disordered; it reads MNTDTQKHEDAMSTTTPARAPHDDAPSGQQPGQGRVG. The next 4 membrane-spanning stretches (helical) occupy residues 61–81, 89–109, 238–258, and 271–291; these read VMAK…TTAF, WFGW…NLAE, IALN…CATL, and MIVL…ALLS. D326 (4-aspartylphosphate intermediate) is an active-site residue. ATP-binding positions include D363, E367, 397-404, and K415; that span reads FTAQTRMS. 2 residues coordinate Mg(2+): D542 and D546. 3 helical membrane-spanning segments follow: residues 612–632, 640–660, and 683–703; these read FAII…LNIM, AILS…PLAL, and LGGL…VSLI.

It belongs to the cation transport ATPase (P-type) (TC 3.A.3) family. Type IA subfamily. The system is composed of three essential subunits: KdpA, KdpB and KdpC.

The protein resides in the cell membrane. It catalyses the reaction K(+)(out) + ATP + H2O = K(+)(in) + ADP + phosphate + H(+). In terms of biological role, part of the high-affinity ATP-driven potassium transport (or Kdp) system, which catalyzes the hydrolysis of ATP coupled with the electrogenic transport of potassium into the cytoplasm. This subunit is responsible for energy coupling to the transport system and for the release of the potassium ions to the cytoplasm. The polypeptide is Potassium-transporting ATPase ATP-binding subunit (Streptomyces coelicolor (strain ATCC BAA-471 / A3(2) / M145)).